A 228-amino-acid polypeptide reads, in one-letter code: Sugar fermentation stimulation protein homolog (228 aa).

It belongs to the SfsA family.

The protein is Sugar fermentation stimulation protein homolog of Desulfitobacterium hafniense (strain DSM 10664 / DCB-2).